Reading from the N-terminus, the 79-residue chain is CDC42 small effector protein 1 (79 aa).

2 S-palmitoyl cysteine lipidation sites follow: C10 and C11. The 14-residue stretch at 30–43 (IGEPMNFVHLTHIG) folds into the CRIB domain. The tract at residues 48 to 79 (GAGDGLAMTGAVQEQMRSKGNRDRPWSNSRGL) is disordered. The segment covering 63 to 72 (MRSKGNRDRP) has biased composition (basic and acidic residues).

It belongs to the CDC42SE/SPEC family. In terms of assembly, interacts with CDC42 (in GTP-bound form). Interacts weakly with RAC1 and not at all with RHOA.

It localises to the cytoplasm. Its subcellular location is the cytoskeleton. The protein resides in the cell membrane. In terms of biological role, probably involved in the organization of the actin cytoskeleton by acting downstream of CDC42, inducing actin filament assembly. Alters CDC42-induced cell shape changes. In activated T-cells, may play a role in CDC42-mediated F-actin accumulation at the immunological synapse. May play a role in early contractile events in phagocytosis in macrophages. The chain is CDC42 small effector protein 1 (CDC42SE1) from Bos taurus (Bovine).